The chain runs to 688 residues: G protein-coupled receptor kinase 3 (688 aa).

Residues 1–190 (MADLEAVLAD…ELNIHLSMND (190 aa)) are N-terminal. An RGS domain is found at 54 to 175 (TFDKIFNQKI…MESDKFTRFC (122 aa)). A Protein kinase domain is found at 191–453 (FSVHRIIGRG…ARELKEHIFF (263 aa)). ATP contacts are provided by residues 197 to 205 (IGRGGFGEV) and Lys-220. The active-site Proton acceptor is Asp-317. The AGC-kinase C-terminal domain occupies 454–521 (KGIDWQHVYL…VISERWQQEV (68 aa)). The PH domain occupies 558-652 (DCIMHGYMLK…WLKELTCTFN (95 aa)).

Belongs to the protein kinase superfamily. AGC Ser/Thr protein kinase family. GPRK subfamily. Interacts with GIT1. In terms of processing, ubiquitinated.

The protein localises to the postsynapse. Its subcellular location is the presynapse. It carries out the reaction [beta-adrenergic receptor] + ATP = [beta-adrenergic receptor]-phosphate + ADP + H(+). In terms of biological role, specifically phosphorylates the agonist-occupied form of the beta-adrenergic and closely related receptors. The chain is G protein-coupled receptor kinase 3 from Mus musculus (Mouse).